A 627-amino-acid polypeptide reads, in one-letter code: Membrane protein insertase YidC (627 aa).

Transmembrane regions (helical) follow at residues 3-23 (KNTV…SWLN), 376-396 (WGLI…PLAY), 450-470 (LPML…PTTI), 502-522 (FYGN…ILYI), 534-554 (EGMA…LFFF), and 558-578 (ASGL…QYMS).

Belongs to the OXA1/ALB3/YidC family. Type 1 subfamily. In terms of assembly, interacts with the Sec translocase complex via SecD. Specifically interacts with transmembrane segments of nascent integral membrane proteins during membrane integration.

The protein localises to the cell inner membrane. Functionally, required for the insertion and/or proper folding and/or complex formation of integral membrane proteins into the membrane. Involved in integration of membrane proteins that insert both dependently and independently of the Sec translocase complex, as well as at least some lipoproteins. Aids folding of multispanning membrane proteins. In Porphyromonas gingivalis (strain ATCC 33277 / DSM 20709 / CIP 103683 / JCM 12257 / NCTC 11834 / 2561), this protein is Membrane protein insertase YidC.